A 138-amino-acid polypeptide reads, in one-letter code: Small ribosomal subunit protein uS11B (138 aa).

Positions 118 to 138 (DVTPVPSDSTRKKGGRRGRRL) are disordered. Basic residues predominate over residues 129–138 (KKGGRRGRRL).

Belongs to the universal ribosomal protein uS11 family. As to quaternary structure, component of the small ribosomal subunit (SSU). Mature yeast ribosomes consist of a small (40S) and a large (60S) subunit. The 40S small subunit contains 1 molecule of ribosomal RNA (18S rRNA) and 33 different proteins (encoded by 57 genes). The large 60S subunit contains 3 rRNA molecules (25S, 5.8S and 5S rRNA) and 46 different proteins (encoded by 81 genes). uS11 interacts with eS1 forming part of the mRNA exit tunnel. uS11 interacts with snoRNA U3. uS11 interacts with MPP10. Component of the ribosomal small subunit (SSU) processome composed of at least 40 protein subunits and snoRNA U3.

It is found in the cytoplasm. The protein localises to the nucleus. The protein resides in the nucleolus. Component of the ribosome, a large ribonucleoprotein complex responsible for the synthesis of proteins in the cell. The small ribosomal subunit (SSU) binds messenger RNAs (mRNAs) and translates the encoded message by selecting cognate aminoacyl-transfer RNA (tRNA) molecules. The large subunit (LSU) contains the ribosomal catalytic site termed the peptidyl transferase center (PTC), which catalyzes the formation of peptide bonds, thereby polymerizing the amino acids delivered by tRNAs into a polypeptide chain. The nascent polypeptides leave the ribosome through a tunnel in the LSU and interact with protein factors that function in enzymatic processing, targeting, and the membrane insertion of nascent chains at the exit of the ribosomal tunnel. uS11 is involved in nucleolar processing of pre-18S ribosomal RNA and ribosome assembly. The polypeptide is Small ribosomal subunit protein uS11B (Saccharomyces cerevisiae (strain ATCC 204508 / S288c) (Baker's yeast)).